A 148-amino-acid chain; its full sequence is Transcriptional regulator MraZ (148 aa).

SpoVT-AbrB domains lie at 5-53 (ETAI…AESE) and 82-125 (AAHL…SEQA).

The protein belongs to the MraZ family. As to quaternary structure, forms oligomers.

It localises to the cytoplasm. The protein resides in the nucleoid. This Stenotrophomonas maltophilia (strain R551-3) protein is Transcriptional regulator MraZ.